We begin with the raw amino-acid sequence, 398 residues long: Gastric triacylglycerol lipase (398 aa).

Residues 1–19 (MWLLLTMASLISVLGTTHG) form the signal peptide. N-linked (GlcNAc...) asparagine glycans are attached at residues asparagine 34 and asparagine 99. Residues 78–377 (PVVFLQHGLL…PFYNHLDFIW (300 aa)) enclose the AB hydrolase-1 domain. The active-site Nucleophile is the serine 172. A disulfide bridge links cysteine 246 with cysteine 255. N-linked (GlcNAc...) asparagine glycans are attached at residues asparagine 271 and asparagine 327. Residues aspartate 343 and histidine 372 each act as charge relay system in the active site.

This sequence belongs to the AB hydrolase superfamily. Lipase family.

It is found in the secreted. The catalysed reaction is a triacylglycerol + H2O = a diacylglycerol + a fatty acid + H(+). The enzyme catalyses 1,2,3-tri-(9Z-octadecenoyl)-glycerol + H2O = 1,2-di-(9Z-octadecenoyl)-sn-glycerol + (9Z)-octadecenoate + H(+). It carries out the reaction 1,2,3-trioctanoylglycerol + H2O = 1,2-dioctanoyl-sn-glycerol + octanoate + H(+). In terms of biological role, catalyzes the hydrolysis of triacylglycerols to yield free fatty acids, diacylglycerol, monoacylglycerol, and glycerol. Shows a preferential hydrolysis at the sn-3 position of triacylglycerol. In Homo sapiens (Human), this protein is Gastric triacylglycerol lipase (LIPF).